Here is a 362-residue protein sequence, read N- to C-terminus: Peptide chain release factor 1 (362 aa).

An N5-methylglutamine modification is found at Q240.

The protein belongs to the prokaryotic/mitochondrial release factor family. Methylated by PrmC. Methylation increases the termination efficiency of RF1.

Its subcellular location is the cytoplasm. Functionally, peptide chain release factor 1 directs the termination of translation in response to the peptide chain termination codons UAG and UAA. This Bifidobacterium longum (strain DJO10A) protein is Peptide chain release factor 1.